The chain runs to 765 residues: 5-methyltetrahydropteroyltriglutamate--homocysteine methyltransferase (765 aa).

Residues 16-19 (RELK) and Lys-121 each bind 5-methyltetrahydropteroyltri-L-glutamate. L-homocysteine is bound by residues 441 to 443 (IGS) and Glu-494. Residues 441 to 443 (IGS) and Glu-494 contribute to the L-methionine site. 5-methyltetrahydropteroyltri-L-glutamate is bound by residues 525–526 (RC) and Trp-571. L-homocysteine is bound at residue Asp-609. Asp-609 contacts L-methionine. Residue Glu-615 participates in 5-methyltetrahydropteroyltri-L-glutamate binding. Residues His-651, Cys-653, and Glu-675 each coordinate Zn(2+). His-704 serves as the catalytic Proton donor. Cys-736 contributes to the Zn(2+) binding site.

Belongs to the vitamin-B12 independent methionine synthase family. It depends on Zn(2+) as a cofactor.

The enzyme catalyses 5-methyltetrahydropteroyltri-L-glutamate + L-homocysteine = tetrahydropteroyltri-L-glutamate + L-methionine. It participates in amino-acid biosynthesis; L-methionine biosynthesis via de novo pathway; L-methionine from L-homocysteine (MetE route): step 1/1. In terms of biological role, catalyzes the transfer of a methyl group from 5-methyltetrahydrofolate to homocysteine resulting in methionine formation. This Saccharophagus degradans (strain 2-40 / ATCC 43961 / DSM 17024) protein is 5-methyltetrahydropteroyltriglutamate--homocysteine methyltransferase.